Reading from the N-terminus, the 680-residue chain is ATPase family AAA domain-containing protein FIGL1 (680 aa).

Disordered regions lie at residues 214-234 (YGNS…NQDR), 250-275 (FGTK…GAPN), and 288-352 (VRQK…GGKT). Residues 295 to 308 (TESPSSCLSPQSDK) are compositionally biased toward polar residues. The span at 313-323 (RGYGSRSGGLR) shows a compositional bias: gly residues. Polar residues predominate over residues 336 to 346 (TNGNNVGNLTS). ATP contacts are provided by residues Ala406 and 446-451 (GTGKTM).

This sequence belongs to the AAA ATPase family. The cofactor is Mg(2+).

It is found in the nucleus. It carries out the reaction ATP + H2O = ADP + phosphate + H(+). Functionally, involved in DNA double-strand break (DBS) repair via homologous recombination (HR). Limits class II meiotic crossover (CO) formation by regulating the invasion step of meiotic HR. May counteract DMC1 and RAD51-mediated inter-homolog strand invasion to limit CO formation. Functions independently of FANCM. The polypeptide is ATPase family AAA domain-containing protein FIGL1 (Arabidopsis thaliana (Mouse-ear cress)).